The following is a 96-amino-acid chain: Large ribosomal subunit protein bL28 (96 aa).

This sequence belongs to the bacterial ribosomal protein bL28 family.

This Methylocella silvestris (strain DSM 15510 / CIP 108128 / LMG 27833 / NCIMB 13906 / BL2) protein is Large ribosomal subunit protein bL28.